The sequence spans 826 residues: 1,4-alpha-glucan-branching enzyme 1, chloroplastic/amyloplastic (826 aa).

A chloroplast-targeting transit peptide spans 1–58; sequence ATTTTTTHNSKNKQYLAKQKPVELTLGYQNPNGCKVCSFGSKGSIYQKVSSGFKGVSV. The active-site Nucleophile is the aspartate 409. Glutamate 464 serves as the catalytic Proton donor. The tract at residues 782–813 is disordered; that stretch reads DTDVARIPDVSMESEDSNLDRIEDNSEDAVDA.

Belongs to the glycosyl hydrolase 13 family. GlgB subfamily. Monomer. Expressed in roots, leaves, stipules, pods and flowers.

The protein localises to the plastid. It localises to the chloroplast. It is found in the amyloplast. The enzyme catalyses Transfers a segment of a (1-&gt;4)-alpha-D-glucan chain to a primary hydroxy group in a similar glucan chain.. It functions in the pathway glycan biosynthesis; starch biosynthesis. Its function is as follows. Catalyzes the formation of the alpha-1,6-glucosidic linkages in starch by scission of a 1,4-alpha-linked oligosaccharide from growing alpha-1,4-glucan chains and the subsequent attachment of the oligosaccharide to the alpha-1,6 position. May preferentially transfer long chains during branching. In Pisum sativum (Garden pea), this protein is 1,4-alpha-glucan-branching enzyme 1, chloroplastic/amyloplastic (SBEII).